The primary structure comprises 213 residues: Ribosomal RNA small subunit methyltransferase G (213 aa).

S-adenosyl-L-methionine is bound by residues Gly-72, Phe-77, 125–126, and Arg-141; that span reads IE.

This sequence belongs to the methyltransferase superfamily. RNA methyltransferase RsmG family.

It is found in the cytoplasm. The enzyme catalyses guanosine(527) in 16S rRNA + S-adenosyl-L-methionine = N(7)-methylguanosine(527) in 16S rRNA + S-adenosyl-L-homocysteine. Its function is as follows. Specifically methylates the N7 position of guanine in position 527 of 16S rRNA. This Sinorhizobium medicae (strain WSM419) (Ensifer medicae) protein is Ribosomal RNA small subunit methyltransferase G.